The primary structure comprises 206 residues: Large ribosomal subunit protein uL4 (206 aa).

The protein belongs to the universal ribosomal protein uL4 family. As to quaternary structure, part of the 50S ribosomal subunit.

One of the primary rRNA binding proteins, this protein initially binds near the 5'-end of the 23S rRNA. It is important during the early stages of 50S assembly. It makes multiple contacts with different domains of the 23S rRNA in the assembled 50S subunit and ribosome. Its function is as follows. Forms part of the polypeptide exit tunnel. The sequence is that of Large ribosomal subunit protein uL4 from Nitrobacter hamburgensis (strain DSM 10229 / NCIMB 13809 / X14).